Here is a 370-residue protein sequence, read N- to C-terminus: Platelet-derived growth factor D (370 aa).

The signal sequence occupies residues 1–23 (MQRLVLVSILLCANFSCYPDTFA). A CUB domain is found at 52–170 (REENIQVTSN…PGFKIYYSFV (119 aa)). Cys109 and Cys131 are oxidised to a cystine. Residue Asn276 is glycosylated (N-linked (GlcNAc...) asparagine). 2 disulfides stabilise this stretch: Cys302-Cys360 and Cys306-Cys362.

It belongs to the PDGF/VEGF growth factor family. In terms of assembly, homodimer; disulfide-linked. Interacts with PDGFRB homodimers, and with heterodimers formed by PDGFRA and PDGFRB. Post-translationally, activated by proteolytic cleavage. Proteolytic removal of the N-terminal CUB domain releasing the core domain is necessary for unmasking the receptor-binding epitopes of the core domain. Cleavage after Arg-247 or Arg-249 by urokinase plasminogen activator gives rise to the active form. Expressed at high levels in developing heart, lung, kidney and some muscle derivatives. Moderately expressed in liver, brain and testis. In the kidney, localized to glomerular mesangial cells and vascular smooth muscle cells. Up-regulated in areas of renal fibrosis. In mice with unilateral ureteral obstruction, expressed in interstitial cells at day 4, with an increased to maximal expression at day 14.

Its subcellular location is the secreted. Functionally, growth factor that plays an essential role in the regulation of embryonic development, cell proliferation, cell migration, survival and chemotaxis. Potent mitogen for cells of mesenchymal origin. Plays an important role in wound healing. Has oncogenic potential and can induce tumor formation. Induces macrophage recruitment, increased interstitial pressure, and blood vessel maturation during angiogenesis. Can initiate events that lead to a mesangial proliferative glomerulonephritis, including influx of monocytes and macrophages and production of extracellular matrix. The polypeptide is Platelet-derived growth factor D (Pdgfd) (Mus musculus (Mouse)).